A 213-amino-acid chain; its full sequence is MRSGVIAQKVGMTRVYNDAGEHVPVTVLRMDGCQVVATRTVEKNGYTAVQLGAGQAKVKNTSKAMRGNFAVANVEPKAKLAEFRVSEDNLLEIGTELKADHFAAGQLVDVTGTTIGKGFAGAMKRHGFGGLRATHGVSVSHRSHGSTGSRQDPGKVFKNKKMAGHMGQTRVTTQNLEVVSTDEDRGLILIKGAVPGSKGAWIIVRDAVKSAAK.

Residue Q151 is modified to N5-methylglutamine.

This sequence belongs to the universal ribosomal protein uL3 family. As to quaternary structure, part of the 50S ribosomal subunit. Forms a cluster with proteins L14 and L19. In terms of processing, methylated by PrmB.

Functionally, one of the primary rRNA binding proteins, it binds directly near the 3'-end of the 23S rRNA, where it nucleates assembly of the 50S subunit. In Rhizobium etli (strain ATCC 51251 / DSM 11541 / JCM 21823 / NBRC 15573 / CFN 42), this protein is Large ribosomal subunit protein uL3.